We begin with the raw amino-acid sequence, 458 residues long: Siroheme synthase (458 aa).

The tract at residues 1-203 (MDYLPLFFDL…GNLAAAEQLI (203 aa)) is precorrin-2 dehydrogenase /sirohydrochlorin ferrochelatase. NAD(+)-binding positions include 22–23 (TI) and 43–44 (PK). Phosphoserine is present on Ser128. A uroporphyrinogen-III C-methyltransferase region spans residues 216–458 (GEVYLVGAGP…RCHEKLNWYK (243 aa)). S-adenosyl-L-methionine is bound at residue Pro225. Catalysis depends on Asp248, which acts as the Proton acceptor. Lys270 serves as the catalytic Proton donor. S-adenosyl-L-methionine-binding positions include 301–303 (GGD), Ile306, 331–332 (TA), Met383, and Gly412.

It in the N-terminal section; belongs to the precorrin-2 dehydrogenase / sirohydrochlorin ferrochelatase family. In the C-terminal section; belongs to the precorrin methyltransferase family.

It carries out the reaction uroporphyrinogen III + 2 S-adenosyl-L-methionine = precorrin-2 + 2 S-adenosyl-L-homocysteine + H(+). The enzyme catalyses precorrin-2 + NAD(+) = sirohydrochlorin + NADH + 2 H(+). The catalysed reaction is siroheme + 2 H(+) = sirohydrochlorin + Fe(2+). It participates in cofactor biosynthesis; adenosylcobalamin biosynthesis; precorrin-2 from uroporphyrinogen III: step 1/1. Its pathway is cofactor biosynthesis; adenosylcobalamin biosynthesis; sirohydrochlorin from precorrin-2: step 1/1. The protein operates within porphyrin-containing compound metabolism; siroheme biosynthesis; precorrin-2 from uroporphyrinogen III: step 1/1. It functions in the pathway porphyrin-containing compound metabolism; siroheme biosynthesis; siroheme from sirohydrochlorin: step 1/1. It participates in porphyrin-containing compound metabolism; siroheme biosynthesis; sirohydrochlorin from precorrin-2: step 1/1. In terms of biological role, multifunctional enzyme that catalyzes the SAM-dependent methylations of uroporphyrinogen III at position C-2 and C-7 to form precorrin-2 via precorrin-1. Then it catalyzes the NAD-dependent ring dehydrogenation of precorrin-2 to yield sirohydrochlorin. Finally, it catalyzes the ferrochelation of sirohydrochlorin to yield siroheme. This Saccharophagus degradans (strain 2-40 / ATCC 43961 / DSM 17024) protein is Siroheme synthase.